The primary structure comprises 300 residues: GTPase Era (300 aa).

In terms of domain architecture, Era-type G spans 6-173 (HSGFVAILGR…IESLVNTLPE (168 aa)). The segment at 14–21 (GRPNVGKS) is G1. 14 to 21 (GRPNVGKS) lines the GTP pocket. Residues 40–44 (QTTRN) form a G2 region. Positions 61 to 64 (DTPG) are G3. Residues 61–65 (DTPGI) and 123–126 (NKID) contribute to the GTP site. The segment at 123–126 (NKID) is G4. The G5 stretch occupies residues 152 to 154 (ISA). The KH type-2 domain occupies 204 to 281 (TREEVPHSVA…YLELWVKVQP (78 aa)).

This sequence belongs to the TRAFAC class TrmE-Era-EngA-EngB-Septin-like GTPase superfamily. Era GTPase family. In terms of assembly, monomer.

The protein localises to the cytoplasm. Its subcellular location is the cell membrane. In terms of biological role, an essential GTPase that binds both GDP and GTP, with rapid nucleotide exchange. Plays a role in 16S rRNA processing and 30S ribosomal subunit biogenesis and possibly also in cell cycle regulation and energy metabolism. The chain is GTPase Era from Ligilactobacillus salivarius (strain UCC118) (Lactobacillus salivarius).